Here is a 578-residue protein sequence, read N- to C-terminus: Dystrotelin (578 aa).

A ZZ-type zinc finger spans residues 223–279; sequence THPARCTLCRTFPITGLRYRCLKCLNFDICQMCFLSGLHSKSHQKSHPVIEHCIQMS. Positions 228, 231, 243, 246, 252, 255, 265, and 269 each coordinate Zn(2+). Residues 322–351 are a coiled coil; the sequence is HHAQARLLKKQLNQYKDKLQAIYTSQEERI. The disordered stretch occupies residues 382–475; sequence RLQPPGPSSS…QSQTQKMPQK (94 aa). Composition is skewed to basic and acidic residues over residues 399–410 and 431–451; these read KVDHSSTEKVPK and PKLDEVDRSHRSHTNAEHALR. Over residues 455 to 472 the composition is skewed to polar residues; it reads SPETTLHSTRAQSQTQKM. Positions 503–537 form a coiled coil; that stretch reads ALAAVEKKEAGNIKERKDELEEEELQELLSKLMDA.

Its subcellular location is the cell membrane. In Homo sapiens (Human), this protein is Dystrotelin (DYTN).